We begin with the raw amino-acid sequence, 715 residues long: Forkhead box protein P2 (715 aa).

Positions 1–28 are enriched in polar residues; sequence MMQESATETISNSSMNQNGMSTLSSQLD. Disordered stretches follow at residues 1–46 and 281–339; these read MMQE…EVST and DNGI…TGAS. A compositionally biased stretch (low complexity) spans 292 to 305; that stretch reads TTNNSSSTTSSNTS. Basic and acidic residues predominate over residues 326–337; sequence ARRDSSSHEETG. The C2H2-type zinc-finger motif lies at 346-371; it reads GVCKWPGCESICEDFGQFLKHLNNEH. A leucine-zipper region spans residues 388–409; that stretch reads VQQLEIQLSKERERLQAMMTHL. Residues 422–426 form a CTBP1-binding region; that stretch reads PLNLV. Residues 438 to 459 are compositionally biased toward low complexity; sequence TSPQSLPQTPTTPTAPVTPITQ. The tract at residues 438–465 is disordered; that stretch reads TSPQSLPQTPTTPTAPVTPITQGPSVIT. Residues 504 to 594 constitute a DNA-binding region (fork-head); the sequence is RPPFTYATLI…SQKITGSPTL (91 aa). Disordered regions lie at residues 649–668 and 678–715; these read LDHI…QPHI and VIAE…EDLE. The segment covering 699 to 715 has biased composition (acidic residues); it reads LEDDREIEEEPLSEDLE.

In terms of assembly, forms homodimers and heterodimers with FOXP1 and FOXP4. Dimerization is required for DNA-binding. Interacts with CTBP1. Interacts with FOXP1. Isoform 1 and isoform 3 interact with TBR1. Interacts with ZMYM2. In terms of tissue distribution, isoform 1 and isoform 6 are expressed in adult and fetal brain, caudate nucleus and lung.

The protein resides in the nucleus. Transcriptional repressor that may play a role in the specification and differentiation of lung epithelium. May also play a role in developing neural, gastrointestinal and cardiovascular tissues. Can act with CTBP1 to synergistically repress transcription but CTPBP1 is not essential. Plays a role in synapse formation by regulating SRPX2 levels. Involved in neural mechanisms mediating the development of speech and language. The protein is Forkhead box protein P2 (FOXP2) of Homo sapiens (Human).